A 352-amino-acid polypeptide reads, in one-letter code: Ion-translocating oxidoreductase complex subunit D (352 aa).

A run of 4 helical transmembrane segments spans residues 20 to 40, 42 to 62, 89 to 109, and 123 to 143; these read IMLL…WFFG, GTLV…ALVL, IPPL…VIIA, and PAMI…TSWL. Residue Thr-187 is modified to FMN phosphoryl threonine. The next 5 membrane-spanning stretches (helical) occupy residues 214–234, 242–262, 267–287, 301–321, and 322–342; these read ILAG…GLWL, WHIP…GWLF, LAAP…FFIL, LIFG…GGYP, and DGVA…DYYT.

Belongs to the NqrB/RnfD family. The complex is composed of six subunits: RsxA, RsxB, RsxC, RsxD, RsxE and RsxG. The cofactor is FMN.

It is found in the cell inner membrane. Functionally, part of a membrane-bound complex that couples electron transfer with translocation of ions across the membrane. Required to maintain the reduced state of SoxR. In Shigella sonnei (strain Ss046), this protein is Ion-translocating oxidoreductase complex subunit D.